Consider the following 385-residue polypeptide: Acetate kinase (385 aa).

Position 9 (asparagine 9) interacts with Mg(2+). An ATP-binding site is contributed by lysine 16. Arginine 87 contributes to the substrate binding site. Aspartate 144 serves as the catalytic Proton donor/acceptor. Residues 202–206 (HLGSG) and 277–279 (DMR) each bind ATP. Glutamate 373 contacts Mg(2+).

This sequence belongs to the acetokinase family. In terms of assembly, homodimer. Mg(2+) serves as cofactor. Requires Mn(2+) as cofactor.

It localises to the cytoplasm. The enzyme catalyses acetate + ATP = acetyl phosphate + ADP. It participates in metabolic intermediate biosynthesis; acetyl-CoA biosynthesis; acetyl-CoA from acetate: step 1/2. In terms of biological role, catalyzes the formation of acetyl phosphate from acetate and ATP. Can also catalyze the reverse reaction. This Rickettsia typhi (strain ATCC VR-144 / Wilmington) protein is Acetate kinase.